We begin with the raw amino-acid sequence, 139 residues long: Putative general secretion pathway protein B (139 aa).

The helical transmembrane segment at 28 to 48 threads the bilayer; it reads IIYVICLLLICLWFAGMVLVG. The interval 93 to 139 is disordered; the sequence is VEEEDDPGVAVENAPSSSEDEENTVEESEEKAGLRERVKNALNELER. Residues 110–121 show a composition bias toward acidic residues; the sequence is SEDEENTVEESE. Positions 122-139 are enriched in basic and acidic residues; it reads EKAGLRERVKNALNELER.

Its subcellular location is the cell membrane. Part of a cryptic operon that encodes proteins involved in type II secretion pathway in other organisms, but is not expressed in strain K12 under standard laboratory conditions. May play a regulatory role under conditions of derepressed gsp gene expression. In Escherichia coli (strain K12), this protein is Putative general secretion pathway protein B.